A 232-amino-acid polypeptide reads, in one-letter code: Small ribosomal subunit protein uS3 (232 aa).

The 69-residue stretch at 39–107 (VRRFLEQRLK…PVHVNIEEVR (69 aa)) folds into the KH type-2 domain.

It belongs to the universal ribosomal protein uS3 family. As to quaternary structure, part of the 30S ribosomal subunit. Forms a tight complex with proteins S10 and S14.

Its function is as follows. Binds the lower part of the 30S subunit head. Binds mRNA in the 70S ribosome, positioning it for translation. The protein is Small ribosomal subunit protein uS3 of Chromohalobacter salexigens (strain ATCC BAA-138 / DSM 3043 / CIP 106854 / NCIMB 13768 / 1H11).